Consider the following 136-residue polypeptide: Classical arabinogalactan protein 11 (136 aa).

Residues 1-20 (MARLFVVVALLALAVGTVFA) form the signal peptide. Composition is skewed to low complexity over residues 24–56 (PSAAPTASPTKSPTKAPAAAPKSSAAAPKASSP), 68–81 (SAASPSDSAEAPTV), and 89–107 (PEADGPSSDGPSSDGPAAA). The interval 24-115 (PSAAPTASPT…AAESPKSGAT (92 aa)) is disordered. A lipid anchor (GPI-anchor amidated serine) is attached at Ser112. A propeptide spans 113–136 (GATTNVKLSIAGTVAAAGFFIFSL) (removed in mature form).

This sequence belongs to the classical AGP family. In terms of processing, O-glycosylated on the hydroxyproline residues.

The protein resides in the cell membrane. Its function is as follows. Proteoglycan that seems to be implicated in diverse developmental roles such as differentiation, cell-cell recognition, embryogenesis and programmed cell death. In Arabidopsis thaliana (Mouse-ear cress), this protein is Classical arabinogalactan protein 11 (AGP11).